Reading from the N-terminus, the 366-residue chain is tRNA/tmRNA (uracil-C(5))-methyltransferase (366 aa).

Glutamine 190, tyrosine 218, asparagine 223, glutamate 239, and aspartate 299 together coordinate S-adenosyl-L-methionine. Cysteine 324 acts as the Nucleophile in catalysis. The active-site Proton acceptor is the glutamate 358.

Belongs to the class I-like SAM-binding methyltransferase superfamily. RNA M5U methyltransferase family. TrmA subfamily.

It catalyses the reaction uridine(54) in tRNA + S-adenosyl-L-methionine = 5-methyluridine(54) in tRNA + S-adenosyl-L-homocysteine + H(+). It carries out the reaction uridine(341) in tmRNA + S-adenosyl-L-methionine = 5-methyluridine(341) in tmRNA + S-adenosyl-L-homocysteine + H(+). Its function is as follows. Dual-specificity methyltransferase that catalyzes the formation of 5-methyluridine at position 54 (m5U54) in all tRNAs, and that of position 341 (m5U341) in tmRNA (transfer-mRNA). The polypeptide is tRNA/tmRNA (uracil-C(5))-methyltransferase (Escherichia coli O81 (strain ED1a)).